Reading from the N-terminus, the 92-residue chain is MGRECEITGKRTMFGNNVPRKGLAKKKGGAGQHIGVKTKRTFKVNLINKKFFIPELGKSVNIKISASALRSISKVGLSVFLKKNCKKIEDFI.

It belongs to the bacterial ribosomal protein bL28 family.

In Borrelia hermsii (strain HS1 / DAH), this protein is Large ribosomal subunit protein bL28.